The primary structure comprises 257 residues: Large ribosomal subunit protein bL28m (257 aa).

The N-terminal 55 residues, 1–55 (MPLHRYPVHLWQKLRLRQGICARLPAHFLRSLEEERTPTPVHYKPHGTKFKINPK), are a transit peptide targeting the mitochondrion.

This sequence belongs to the bacterial ribosomal protein bL28 family. Component of the mitochondrial ribosome large subunit (39S) which comprises a 16S rRNA and about 50 distinct proteins. Interacts with OXA1L.

The protein localises to the mitochondrion. The sequence is that of Large ribosomal subunit protein bL28m (Mrpl28) from Mus musculus (Mouse).